Consider the following 155-residue polypeptide: Endoribonuclease YbeY (155 aa).

Residues His115, His119, and His125 each contribute to the Zn(2+) site.

Belongs to the endoribonuclease YbeY family. It depends on Zn(2+) as a cofactor.

It is found in the cytoplasm. Single strand-specific metallo-endoribonuclease involved in late-stage 70S ribosome quality control and in maturation of the 3' terminus of the 16S rRNA. In Polynucleobacter asymbioticus (strain DSM 18221 / CIP 109841 / QLW-P1DMWA-1) (Polynucleobacter necessarius subsp. asymbioticus), this protein is Endoribonuclease YbeY.